The sequence spans 286 residues: F-box/SPRY domain-containing protein 1 (286 aa).

The residue at position 2 (A2) is an N-acetylalanine. The F-box domain occupies 33 to 82; that stretch reads SGVGGRLPSRVLELVFSYLELSELRSCALVCKHWYRCLHGDENSEVWRSL. The B30.2/SPRY domain maps to 92 to 284; it reads LRTDILCNLP…VTLVYLGKPL (193 aa).

Belongs to the FBXO45/Fsn family. In terms of assembly, forms a complex with MYCBP2 and SKP1. Interacts with HEY1; leading to FBXO45 nuclear translocation. Interacts (via SPRY domain) with CDH2. As to expression, expressed speciffically in the central nervous system, including cerebellum, medulla oblongata, olfactory bulb, hippocampus, cortex and brain stem.

It is found in the secreted. Its subcellular location is the postsynaptic cell membrane. The protein resides in the presynaptic cell membrane. The protein localises to the nucleus. Its pathway is protein modification; protein ubiquitination. Functionally, component of E3 ubiquitin ligase complex consisting of FBXO45, MYCBP2 and SKP1. Functions in substrate recognition but plays also an important role in assembly of the complex. Required for normal neuromuscular synaptogenesis, axon pathfinding and neuronal migration. Regulates neuron migration during brain development through interaction with N-cadherin/CDH2 after secretion via a non-classical mechanism. Plays a role in the regulation of neurotransmission at mature neurons. May control synaptic activity by controlling UNC13A via ubiquitin dependent pathway. Specifically recognizes TP73, promoting its ubiquitination and degradation. Polyubiquitinates NMNAT2, an adenylyltransferase that acts as an axon maintenance factor, and regulates its stability and degradation by the proteasome. Acts also by ubiquitinating FBXW7 during prolonged mitotic arrest and promotes FBXW7 proteasomal degradation. Induces subsequently an increase in mitotic slippage and prevents mitotic cell death. In response to influenza infection, mediates interferon-lambda receptor IFNLR1 polyubiquitination and degradation through the ubiquitin-proteasome system by docking with its intracellular receptor domain. The chain is F-box/SPRY domain-containing protein 1 from Mus musculus (Mouse).